The primary structure comprises 525 residues: Pre-mRNA-processing factor 19 homolog 2 (525 aa).

Residues M1–P70 enclose the U-box domain. WD repeat units lie at residues T220–T261, G262–C301, D307–Q346, S351–K390, G393–S431, L433–N469, and S478–V517. Residues F409–R424 carry the DWD box motif.

Belongs to the WD repeat PRP19 family. In terms of assembly, homotetramer. Component of the multiprotein assembly MOS4-associated complex (MAC) at least composed of MOS4, CDC5, PRL1 and PRP19 which is related to the PRP19C/Prp19 complex/NTC/Nineteen complex identified in other organisms. Associated with the spliceosome.

The protein resides in the nucleus. The catalysed reaction is S-ubiquitinyl-[E2 ubiquitin-conjugating enzyme]-L-cysteine + [acceptor protein]-L-lysine = [E2 ubiquitin-conjugating enzyme]-L-cysteine + N(6)-ubiquitinyl-[acceptor protein]-L-lysine.. It functions in the pathway protein modification; protein ubiquitination. Functionally, probable ubiquitin-protein ligase which is mainly involved pre-mRNA splicing and DNA repair. Component of the MAC complex that probably regulates defense responses through transcriptional control and thereby is essential for plant innate immunity. This chain is Pre-mRNA-processing factor 19 homolog 2 (PRP19B), found in Arabidopsis thaliana (Mouse-ear cress).